The chain runs to 203 residues: Peptide deformylase (203 aa).

Cys-130 and His-173 together coordinate Fe cation. Residue Glu-174 is part of the active site. His-177 contributes to the Fe cation binding site.

It belongs to the polypeptide deformylase family. The cofactor is Fe(2+).

The catalysed reaction is N-terminal N-formyl-L-methionyl-[peptide] + H2O = N-terminal L-methionyl-[peptide] + formate. In terms of biological role, removes the formyl group from the N-terminal Met of newly synthesized proteins. Requires at least a dipeptide for an efficient rate of reaction. N-terminal L-methionine is a prerequisite for activity but the enzyme has broad specificity at other positions. In Streptococcus pneumoniae serotype 19F (strain G54), this protein is Peptide deformylase.